The sequence spans 435 residues: Glutamine synthetase (435 aa).

In terms of domain architecture, GS beta-grasp spans 12–94 (KGVKYFMISY…VAADCIMDDA (83 aa)). A GS catalytic domain is found at 100 to 435 (PRVVLKKLVA…EWEHQTTLDV (336 aa)). Positions 123, 125, 180, and 187 each coordinate Mg(2+). Gly-232 serves as a coordination point for L-glutamate. His-236 provides a ligand contact to Mg(2+). Ser-240 contacts ATP. Residues Arg-291 and Arg-315 each coordinate L-glutamate. Positions 315 and 320 each coordinate ATP. Glu-328 is a Mg(2+) binding site. Arg-330 lines the L-glutamate pocket.

Belongs to the glutamine synthetase family. As to quaternary structure, homooctamer. Mg(2+) serves as cofactor.

The enzyme catalyses L-glutamate + NH4(+) + ATP = L-glutamine + ADP + phosphate + H(+). With respect to regulation, inhibited by methionine sulfoximine, ADP and pyrophosphate, but not by various nitrogen-containing metabolites that inhibit other GS enzymes. In terms of biological role, catalyzes the ATP-dependent biosynthesis of glutamine from glutamate and ammonia. The chain is Glutamine synthetase from Rhizobium meliloti (strain 1021) (Ensifer meliloti).